We begin with the raw amino-acid sequence, 236 residues long: SPbeta prophage-derived uncharacterized protein YomV (236 aa).

In Bacillus subtilis (strain 168), this protein is SPbeta prophage-derived uncharacterized protein YomV (yomV).